The chain runs to 357 residues: Phosphoribosylformylglycinamidine cyclo-ligase (357 aa).

The protein belongs to the AIR synthase family.

The protein localises to the cytoplasm. It carries out the reaction 2-formamido-N(1)-(5-O-phospho-beta-D-ribosyl)acetamidine + ATP = 5-amino-1-(5-phospho-beta-D-ribosyl)imidazole + ADP + phosphate + H(+). Its pathway is purine metabolism; IMP biosynthesis via de novo pathway; 5-amino-1-(5-phospho-D-ribosyl)imidazole from N(2)-formyl-N(1)-(5-phospho-D-ribosyl)glycinamide: step 2/2. The protein is Phosphoribosylformylglycinamidine cyclo-ligase of Rhodopseudomonas palustris (strain ATCC BAA-98 / CGA009).